The chain runs to 270 residues: Glucosamine-6-phosphate deaminase (270 aa).

D68 functions as the Proton acceptor; for enolization step in the catalytic mechanism. D145 (for ring-opening step) is an active-site residue. The active-site Proton acceptor; for ring-opening step is H147. Catalysis depends on E152, which acts as the For ring-opening step.

This sequence belongs to the glucosamine/galactosamine-6-phosphate isomerase family. NagB subfamily.

The catalysed reaction is alpha-D-glucosamine 6-phosphate + H2O = beta-D-fructose 6-phosphate + NH4(+). It participates in amino-sugar metabolism; N-acetylneuraminate degradation; D-fructose 6-phosphate from N-acetylneuraminate: step 5/5. Functionally, catalyzes the reversible isomerization-deamination of glucosamine 6-phosphate (GlcN6P) to form fructose 6-phosphate (Fru6P) and ammonium ion. The chain is Glucosamine-6-phosphate deaminase from Bifidobacterium longum (strain NCC 2705).